Reading from the N-terminus, the 41-residue chain is Large ribosomal subunit protein bL32c (41 aa).

This sequence belongs to the bacterial ribosomal protein bL32 family.

The protein localises to the plastid. The sequence is that of Large ribosomal subunit protein bL32c (rpl32) from Helicosporidium sp. subsp. Simulium jonesii (Green alga).